The following is a 488-amino-acid chain: Bifunctional protein HldE (488 aa).

The segment at 1 to 331 (MTELSALVER…VALHREDLTL (331 aa)) is ribokinase. An ATP-binding site is contributed by 206 to 209 (NRKE). D276 is an active-site residue. Residues 358-488 (FTNGCFDLLH…TNTIKKMNGN (131 aa)) form a cytidylyltransferase region.

This sequence in the N-terminal section; belongs to the carbohydrate kinase PfkB family. In the C-terminal section; belongs to the cytidylyltransferase family. Homodimer.

It catalyses the reaction D-glycero-beta-D-manno-heptose 7-phosphate + ATP = D-glycero-beta-D-manno-heptose 1,7-bisphosphate + ADP + H(+). The catalysed reaction is D-glycero-beta-D-manno-heptose 1-phosphate + ATP + H(+) = ADP-D-glycero-beta-D-manno-heptose + diphosphate. It participates in nucleotide-sugar biosynthesis; ADP-L-glycero-beta-D-manno-heptose biosynthesis; ADP-L-glycero-beta-D-manno-heptose from D-glycero-beta-D-manno-heptose 7-phosphate: step 1/4. The protein operates within nucleotide-sugar biosynthesis; ADP-L-glycero-beta-D-manno-heptose biosynthesis; ADP-L-glycero-beta-D-manno-heptose from D-glycero-beta-D-manno-heptose 7-phosphate: step 3/4. Its function is as follows. Catalyzes the phosphorylation of D-glycero-D-manno-heptose 7-phosphate at the C-1 position to selectively form D-glycero-beta-D-manno-heptose-1,7-bisphosphate. Catalyzes the ADP transfer from ATP to D-glycero-beta-D-manno-heptose 1-phosphate, yielding ADP-D-glycero-beta-D-manno-heptose. The polypeptide is Bifunctional protein HldE (Paramagnetospirillum magneticum (strain ATCC 700264 / AMB-1) (Magnetospirillum magneticum)).